A 613-amino-acid polypeptide reads, in one-letter code: Protein CER1-like 2 (613 aa).

6 consecutive transmembrane segments (helical) span residues W13–Y33, L44–S64, I95–I115, G122–H142, L182–I202, and Y322–F342. The 135-residue stretch at V134–T268 folds into the Fatty acid hydroxylase domain.

Belongs to the sterol desaturase family. Not detected in any tissues.

Its subcellular location is the membrane. The polypeptide is Protein CER1-like 2 (Arabidopsis thaliana (Mouse-ear cress)).